Consider the following 120-residue polypeptide: MANPGLGLLLALGLPFLLARWGRAWGQIQTTSANENSTVLPSSTSSSSDGNLRPEAITAIIVVFSLLAALLLAVGLALLVRKLREKRQTEGTYRPSSEEQVGARVPPTPNLKLPPEERLI.

The N-terminal stretch at 1-26 (MANPGLGLLLALGLPFLLARWGRAWG) is a signal peptide. The Extracellular portion of the chain corresponds to 27-59 (QIQTTSANENSTVLPSSTSSSSDGNLRPEAITA). N-linked (GlcNAc...) asparagine glycosylation is present at asparagine 36. Residues 60-80 (IIVVFSLLAALLLAVGLALLV) traverse the membrane as a helical segment. At 81 to 120 (RKLREKRQTEGTYRPSSEEQVGARVPPTPNLKLPPEERLI) the chain is on the cytoplasmic side. The interaction with EPB41L5 stretch occupies residues 84–120 (REKRQTEGTYRPSSEEQVGARVPPTPNLKLPPEERLI). Residues 87 to 120 (RQTEGTYRPSSEEQVGARVPPTPNLKLPPEERLI) are disordered. A compositionally biased stretch (polar residues) spans 90–99 (EGTYRPSSEE). The short motif at 117–120 (ERLI) is the PDZ-binding element.

In terms of assembly, component of a complex composed of CRB3, PALS1 and PATJ. Interacts (via C-terminus) with PALS1 (via PDZ domain). Interacts with PARD6A. Interacts (via intracellular domain) with EPB41L5. Interacts with WDR83. As to expression, preferentially expressed in epithelial tissues. Expressed at high levels in lung, kidney, and colon. Expressed at high levels in retina, colon and mammary glands. Moderately expressed in liver, spleen, pancreas and prostate. Moderately to weakly expressed in the placenta. Weakly expressed in skeletal muscle and small intestine.

The protein resides in the apical cell membrane. It localises to the cell junction. Its subcellular location is the tight junction. Involved in the establishment of cell polarity in mammalian epithelial cells. Regulates the morphogenesis of tight junctions. Involved in promoting phosphorylation and cytoplasmic retention of transcriptional coactivators YAP1 and WWTR1/TAZ which leads to suppression of TGFB1-dependent transcription of target genes such as CCN2/CTGF, SERPINE1/PAI1, SNAI1/SNAIL1 and SMAD7. The polypeptide is Protein crumbs homolog 3 (Homo sapiens (Human)).